The following is a 102-amino-acid chain: Putative septation protein SpoVG 1 (102 aa).

This sequence belongs to the SpoVG family.

Its function is as follows. Could be involved in septation. This is Putative septation protein SpoVG 1 from Listeria monocytogenes serotype 4b (strain F2365).